A 131-amino-acid chain; its full sequence is Profilin-5 (131 aa).

It belongs to the profilin family. In terms of assembly, occurs in many kinds of cells as a complex with monomeric actin in a 1:1 ratio.

The protein resides in the cytoplasm. Its subcellular location is the cytoskeleton. Binds to actin and affects the structure of the cytoskeleton. At high concentrations, profilin prevents the polymerization of actin, whereas it enhances it at low concentrations. By binding to PIP2, it inhibits the formation of IP3 and DG. This chain is Profilin-5, found in Hevea brasiliensis (Para rubber tree).